A 553-amino-acid chain; its full sequence is Pseudouridylate synthase RPUSD2 (553 aa).

The disordered stretch occupies residues 76-135 (AVGKQVPESGDQAQGGEGQLPSNGEQTPAPVADSGKRKKRRGATGERVVPPPKKRRTGVS). Asp287 is a catalytic residue. Thr490 carries the phosphothreonine modification.

This sequence belongs to the pseudouridine synthase RluA family.

It catalyses the reaction a uridine in mRNA = a pseudouridine in mRNA. In terms of biological role, pseudouridine synthase that catalyzes pseudouridylation of mRNAs. The protein is Pseudouridylate synthase RPUSD2 of Mus musculus (Mouse).